Here is a 241-residue protein sequence, read N- to C-terminus: Uridylate kinase (241 aa).

12-15 serves as a coordination point for ATP; that stretch reads KLSG. Positions 20 to 25 are involved in allosteric activation by GTP; that stretch reads GDKGQG. Gly54 provides a ligand contact to UMP. Residues Gly55 and Arg59 each contribute to the ATP site. UMP contacts are provided by residues Asp74 and 135 to 142; that span reads TGSPYFST. The ATP site is built by Asn163, Tyr169, and Asp172.

This sequence belongs to the UMP kinase family. Homohexamer.

The protein localises to the cytoplasm. The enzyme catalyses UMP + ATP = UDP + ADP. The protein operates within pyrimidine metabolism; CTP biosynthesis via de novo pathway; UDP from UMP (UMPK route): step 1/1. With respect to regulation, allosterically activated by GTP. Inhibited by UTP. In terms of biological role, catalyzes the reversible phosphorylation of UMP to UDP. The sequence is that of Uridylate kinase from Leuconostoc mesenteroides subsp. mesenteroides (strain ATCC 8293 / DSM 20343 / BCRC 11652 / CCM 1803 / JCM 6124 / NCDO 523 / NBRC 100496 / NCIMB 8023 / NCTC 12954 / NRRL B-1118 / 37Y).